Consider the following 274-residue polypeptide: Bis(5'-nucleosyl)-tetraphosphatase, symmetrical (274 aa).

It belongs to the Ap4A hydrolase family.

It catalyses the reaction P(1),P(4)-bis(5'-adenosyl) tetraphosphate + H2O = 2 ADP + 2 H(+). Functionally, hydrolyzes diadenosine 5',5'''-P1,P4-tetraphosphate to yield ADP. The sequence is that of Bis(5'-nucleosyl)-tetraphosphatase, symmetrical from Janthinobacterium sp. (strain Marseille) (Minibacterium massiliensis).